The following is a 267-amino-acid chain: NAD kinase (267 aa).

Residue Asp-52 is the Proton acceptor of the active site. NAD(+) contacts are provided by residues 52–53 (DG), Arg-57, 121–122 (NE), Arg-132, Lys-150, Asp-152, 163–168 (TAYSLS), and Ala-187.

It belongs to the NAD kinase family. A divalent metal cation serves as cofactor.

Its subcellular location is the cytoplasm. The enzyme catalyses NAD(+) + ATP = ADP + NADP(+) + H(+). Its function is as follows. Involved in the regulation of the intracellular balance of NAD and NADP, and is a key enzyme in the biosynthesis of NADP. Catalyzes specifically the phosphorylation on 2'-hydroxyl of the adenosine moiety of NAD to yield NADP. The chain is NAD kinase from Fusobacterium nucleatum subsp. nucleatum (strain ATCC 25586 / DSM 15643 / BCRC 10681 / CIP 101130 / JCM 8532 / KCTC 2640 / LMG 13131 / VPI 4355).